The sequence spans 486 residues: MWKSVVGHDVSVSVETQGDDWDTDPDFVNDISEKEQRWGAKTIEGSGRTEHINIHQLRNKVSEEHDVLRKKEMESGPKASHGYGGRFGVERDRMDKSAVGHEYVAEVEKHSSQTDAAKGFGGKYGVERDRADKSAVGFDYKGEVEKHTSQKDYSRGFGGRYGVEKDKWDKAALGYDYKGETEKHESQRDYAKGFGGQYGIQKDRVDKSAVGFNEMEAPTTAYKKTTPIEAASSGTRGLKAKFESMAEEKRKREEEEKAQQVARRQQERKAVTKRSPEAPQPVIAMEEPAVPAPLPKKISSEAWPPVGTPPSSESEPVRTSREHPVPLLPIRQTLPEDNEEPPALPPRTLEGLQVEEEPVYEAEPEPEPEPEPEPENDYEDVEEMDRHEQEDEPEGDYEEVLEPEDSSFSSALAGSSGCPAGAGAGAVALGISAVAVYDYQGEGSDELSFDPDDVITDIEMVDEGWWRGRCHGHFGLFPANYVKLLE.

The interval 27–66 (FVNDISEKEQRWGAKTIEGSGRTEHINIHQLRNKVSEEHD) is involved in HAX-1 binding. An N6-acetyllysine modification is found at Lys-41. Cortactin repeat units follow at residues 79–115 (ASHGYGGRFGVERDRMDKSAVGHEYVAEVEKHSSQTD), 116–152 (AAKGFGGKYGVERDRADKSAVGFDYKGEVEKHTSQKD), and 153–189 (YSRGFGGRYGVEKDKWDKAALGYDYKGETEKHESQRD). At Lys-123 the chain carries N6-acetyllysine. Tyr-140 carries the phosphotyrosine modification. The Cortactin 4; truncated repeat unit spans residues 190 to 212 (YAKGFGGQYGIQKDRVDKSAVGF). Lys-192 carries the N6-acetyllysine modification. Residue Tyr-198 is modified to Phosphotyrosine. At Tyr-222 the chain carries Phosphotyrosine; by FGR. Lys-241 is modified (N6-acetyllysine). Residues 243–276 (ESMAEEKRKREEEEKAQQVARRQQERKAVTKRSP) are compositionally biased toward basic and acidic residues. The interval 243–419 (ESMAEEKRKR…SALAGSSGCP (177 aa)) is disordered. Ser-275 is subject to Phosphoserine. Thr-308 carries the phosphothreonine modification. Basic and acidic residues predominate over residues 315 to 324 (EPVRTSREHP). Acidic residues-rich tracts occupy residues 353-383 (QVEEEPVYEAEPEPEPEPEPEPENDYEDVEE) and 390-405 (EDEPEGDYEEVLEPED). Phosphotyrosine; by SYK and FES is present on residues Tyr-378 and Tyr-397. Residues 406–419 (SSFSSALAGSSGCP) show a composition bias toward low complexity. Residues 428–486 (ALGISAVAVYDYQGEGSDELSFDPDDVITDIEMVDEGWWRGRCHGHFGLFPANYVKLLE) enclose the SH3 domain.

Associates with the SH2 and SH3 domains of LCK. Binding to he LCK SH3 domain occurs constitutively, while binding to the LCK SH2 domain occurs only upon TCR stimulation. A similar binding pattern was observed with LYN, but not with FYN in which the FYN SH2 region associates upon TCR stimulation but the FYN SH3 region does not associate regardless of TCR stimulation. Directly associates with HAX1, through binding to its C-terminal region. Interacts with HS1BP3. Interacts with FES/FPS. Interacts (via SH2 domain) with FGR. Forms a multiprotein complex with LYN and ANKRD54. Post-translationally, phosphorylated by FES. Phosphorylated by LYN, FYN and FGR after cross-linking of surface IgM on B-cells. Phosphorylation by LYN, FYN and FGR requires prior phosphorylation by SYK or FES. As to expression, expressed only in tissues and cells of hematopoietic origin.

The protein localises to the membrane. It is found in the cytoplasm. Its subcellular location is the mitochondrion. Substrate of the antigen receptor-coupled tyrosine kinase. Plays a role in antigen receptor signaling for both clonal expansion and deletion in lymphoid cells. May also be involved in the regulation of gene expression. In Homo sapiens (Human), this protein is Hematopoietic lineage cell-specific protein (HCLS1).